The primary structure comprises 567 residues: Serine/threonine-protein kinase SSN3 (567 aa).

The region spanning Tyr-68–Phe-470 is the Protein kinase domain. An ATP-binding site is contributed by Ile-74–Val-82. The tract at residues Arg-88 to Arg-179 is disordered. Residues Ser-90–Ser-101 are compositionally biased toward low complexity. Composition is skewed to polar residues over residues Leu-102 to Gly-122 and Pro-133 to Thr-150. A compositionally biased stretch (basic and acidic residues) spans Gly-167 to Arg-179. An ATP-binding site is contributed by Lys-190. Asp-293 functions as the Proton acceptor in the catalytic mechanism. Low complexity predominate over residues Ala-546–Ser-556. The disordered stretch occupies residues Ala-546 to Lys-567.

The protein belongs to the protein kinase superfamily. CMGC Ser/Thr protein kinase family. CDC2/CDKX subfamily. Component of the SRB8-11 complex, a regulatory module of the Mediator complex. It depends on Mg(2+) as a cofactor.

It localises to the nucleus. It carries out the reaction L-seryl-[protein] + ATP = O-phospho-L-seryl-[protein] + ADP + H(+). It catalyses the reaction L-threonyl-[protein] + ATP = O-phospho-L-threonyl-[protein] + ADP + H(+). The enzyme catalyses [DNA-directed RNA polymerase] + ATP = phospho-[DNA-directed RNA polymerase] + ADP + H(+). Its function is as follows. Component of the SRB8-11 complex. The SRB8-11 complex is a regulatory module of the Mediator complex which is itself involved in regulation of basal and activated RNA polymerase II-dependent transcription. The SRB8-11 complex may be involved in the transcriptional repression of a subset of genes regulated by Mediator. It may inhibit the association of the Mediator complex with RNA polymerase II to form the holoenzyme complex. The SRB8-11 complex phosphorylates the C-terminal domain (CTD) of the largest subunit of RNA polymerase II. The sequence is that of Serine/threonine-protein kinase SSN3 (SSN3) from Candida glabrata (strain ATCC 2001 / BCRC 20586 / JCM 3761 / NBRC 0622 / NRRL Y-65 / CBS 138) (Yeast).